Consider the following 285-residue polypeptide: MLTNSERVKVLSEALPYIQQFSSRIIVIKYGGAAMKNQKLKDQVISDLVFLSFIGLRPILVHGGGPEINFWLDRLKILPKFDDGVRVTDQPTMDIVEMVLVGRVNKDLVATINKQGGKSVGLSGKDGLLITPRPNGKANLGFVGEVQNIDTKLLKILINNNYIPVIASVAADKEGQSYNINADTVAGEIAARLSNAEKLILLTDTPGILRNSSDPSTLISHLNIQEARDLTQTAVISGGMIPKVNCCIRSLAQGVASAHILDGRIDHALLLEILTDQGIGSMLVV.

Substrate-binding positions include 64-65 (GG), Arg-86, and Asn-179.

The protein belongs to the acetylglutamate kinase family. ArgB subfamily.

It localises to the plastid. The protein localises to the chloroplast. The enzyme catalyses N-acetyl-L-glutamate + ATP = N-acetyl-L-glutamyl 5-phosphate + ADP. It participates in amino-acid biosynthesis; L-arginine biosynthesis; N(2)-acetyl-L-ornithine from L-glutamate: step 2/4. Catalyzes the ATP-dependent phosphorylation of N-acetyl-L-glutamate. In Pyropia yezoensis (Susabi-nori), this protein is Acetylglutamate kinase.